The chain runs to 253 residues: Indole-3-glycerol phosphate synthase (253 aa).

Belongs to the TrpC family.

It carries out the reaction 1-(2-carboxyphenylamino)-1-deoxy-D-ribulose 5-phosphate + H(+) = (1S,2R)-1-C-(indol-3-yl)glycerol 3-phosphate + CO2 + H2O. It participates in amino-acid biosynthesis; L-tryptophan biosynthesis; L-tryptophan from chorismate: step 4/5. This is Indole-3-glycerol phosphate synthase from Exiguobacterium sp. (strain ATCC BAA-1283 / AT1b).